The sequence spans 261 residues: MYSGNGLAVRVIPCLDVYCGRVVKGVNFKNLRDAGDLVELAAAYDAEGADELAFLDVTASSSGRATMLEVVRCTAEQVFIPLMVGGGVRTVADVDVLLRAGADKVAVNTAAIARPELLADMAGQFGSQCIVLSVDARTVPTGSARTPSGWEATTHGGYRGTGIDAVEWAARGADLGVGEILLNSMDADGTKAGFDLAMLRAVRAAVTVPVIASGGAGAIEHFVPAVTAGADAVLAASVFHFRELTIGQVKDAMAAAGIAVR.

Residues Asp-16 and Asp-135 contribute to the active site.

This sequence belongs to the HisA/HisF family. Heterodimer of HisH and HisF.

Its subcellular location is the cytoplasm. The enzyme catalyses 5-[(5-phospho-1-deoxy-D-ribulos-1-ylimino)methylamino]-1-(5-phospho-beta-D-ribosyl)imidazole-4-carboxamide + L-glutamine = D-erythro-1-(imidazol-4-yl)glycerol 3-phosphate + 5-amino-1-(5-phospho-beta-D-ribosyl)imidazole-4-carboxamide + L-glutamate + H(+). The protein operates within amino-acid biosynthesis; L-histidine biosynthesis; L-histidine from 5-phospho-alpha-D-ribose 1-diphosphate: step 5/9. IGPS catalyzes the conversion of PRFAR and glutamine to IGP, AICAR and glutamate. The HisF subunit catalyzes the cyclization activity that produces IGP and AICAR from PRFAR using the ammonia provided by the HisH subunit. In Mycobacterium leprae (strain Br4923), this protein is Imidazole glycerol phosphate synthase subunit HisF.